The following is a 268-amino-acid chain: Thiazole synthase (268 aa).

K111 serves as the catalytic Schiff-base intermediate with DXP. 1-deoxy-D-xylulose 5-phosphate is bound by residues G172, 198-199, and 220-221; these read AG and NT.

This sequence belongs to the ThiG family. As to quaternary structure, homotetramer. Forms heterodimers with either ThiH or ThiS.

It localises to the cytoplasm. The enzyme catalyses [ThiS sulfur-carrier protein]-C-terminal-Gly-aminoethanethioate + 2-iminoacetate + 1-deoxy-D-xylulose 5-phosphate = [ThiS sulfur-carrier protein]-C-terminal Gly-Gly + 2-[(2R,5Z)-2-carboxy-4-methylthiazol-5(2H)-ylidene]ethyl phosphate + 2 H2O + H(+). It functions in the pathway cofactor biosynthesis; thiamine diphosphate biosynthesis. Its function is as follows. Catalyzes the rearrangement of 1-deoxy-D-xylulose 5-phosphate (DXP) to produce the thiazole phosphate moiety of thiamine. Sulfur is provided by the thiocarboxylate moiety of the carrier protein ThiS. In vitro, sulfur can be provided by H(2)S. The polypeptide is Thiazole synthase (Caulobacter sp. (strain K31)).